We begin with the raw amino-acid sequence, 279 residues long: Phosphatidylglycerol--prolipoprotein diacylglyceryl transferase (279 aa).

3 helical membrane-spanning segments follow: residues 18-38, 55-75, and 89-109; these read LSVRWYGIIIAVGILLGYFVA, IIFYSALFGFIAARIYFVIFQ, and IWHGGIAIHGGLIGGFIAGVI. Residue arginine 137 participates in a 1,2-diacyl-sn-glycero-3-phospho-(1'-sn-glycerol) binding. 2 helical membrane passes run 203–223 and 235–255; these read LGETFFLYLTWYSIGRFFIEG and IRVAQLVSILLILISISLIVY.

Belongs to the Lgt family.

It is found in the cell membrane. It carries out the reaction L-cysteinyl-[prolipoprotein] + a 1,2-diacyl-sn-glycero-3-phospho-(1'-sn-glycerol) = an S-1,2-diacyl-sn-glyceryl-L-cysteinyl-[prolipoprotein] + sn-glycerol 1-phosphate + H(+). The protein operates within protein modification; lipoprotein biosynthesis (diacylglyceryl transfer). Catalyzes the transfer of the diacylglyceryl group from phosphatidylglycerol to the sulfhydryl group of the N-terminal cysteine of a prolipoprotein, the first step in the formation of mature lipoproteins. This Staphylococcus aureus (strain MSSA476) protein is Phosphatidylglycerol--prolipoprotein diacylglyceryl transferase.